Here is a 118-residue protein sequence, read N- to C-terminus: Large ribosomal subunit protein uL18 (118 aa).

This sequence belongs to the universal ribosomal protein uL18 family. As to quaternary structure, part of the 50S ribosomal subunit; part of the 5S rRNA/L5/L18/L25 subcomplex. Contacts the 5S and 23S rRNAs.

Its function is as follows. This is one of the proteins that bind and probably mediate the attachment of the 5S RNA into the large ribosomal subunit, where it forms part of the central protuberance. This is Large ribosomal subunit protein uL18 from Campylobacter jejuni subsp. doylei (strain ATCC BAA-1458 / RM4099 / 269.97).